Here is a 577-residue protein sequence, read N- to C-terminus: Arginine--tRNA ligase (577 aa).

The 'HIGH' region signature appears at 122–132 (PNVAKEMHVGH).

The protein belongs to the class-I aminoacyl-tRNA synthetase family. Monomer.

It is found in the cytoplasm. The catalysed reaction is tRNA(Arg) + L-arginine + ATP = L-arginyl-tRNA(Arg) + AMP + diphosphate. This is Arginine--tRNA ligase from Enterobacter sp. (strain 638).